A 576-amino-acid polypeptide reads, in one-letter code: Arginine--tRNA ligase (576 aa).

A 'HIGH' region motif is present at residues Ala132–His142.

This sequence belongs to the class-I aminoacyl-tRNA synthetase family. Monomer.

It is found in the cytoplasm. The enzyme catalyses tRNA(Arg) + L-arginine + ATP = L-arginyl-tRNA(Arg) + AMP + diphosphate. In Ehrlichia ruminantium (strain Gardel), this protein is Arginine--tRNA ligase.